We begin with the raw amino-acid sequence, 507 residues long: Cuticlin-4 (507 aa).

The first 19 residues, 1-19 (MFHFTRILAAFLLPTLCFC), serve as a signal peptide directing secretion. Residues 20–471 (GYSTAPSSTV…KTCFSTSRMY (452 aa)) lie on the Extracellular side of the membrane. One can recognise a ZP domain in the interval 42-280 (VCETASISLL…YGCSNTQPQC (239 aa)). Positions 292-350 (KTTETAEPYPYDSHESGYPTRPANYPVASSRYPIPTTQAPASYPSSPAPPPPGADIDNG) are disordered. N-linked (GlcNAc...) asparagine glycans are attached at residues Asn374 and Asn408. A helical transmembrane segment spans residues 472-492 (FTLILLCLLFATTVVVFIVIV). The Cytoplasmic portion of the chain corresponds to 493–507 (QKQRQILAQTAFFKP).

The protein localises to the cell membrane. Plays a role in alae formation and subsequent cuticle attachment in adults. The sequence is that of Cuticlin-4 from Caenorhabditis elegans.